A 360-amino-acid polypeptide reads, in one-letter code: Cyclin-D1-binding protein 1 (360 aa).

A2 is subject to N-acetylalanine. Interaction with TCF3 regions lie at residues 2–184 (ASAT…VDFV) and 150–360 (ISYN…ELEL). Interaction with RPLP0 regions lie at residues 2 to 190 (ASAT…AHEE) and 240 to 360 (LIIP…ELEL). A required for interaction with CCND1 region spans residues 2–208 (ASATAPAAAV…DPYSGLLNDT (207 aa)).

Belongs to the CCNDBP1 family. In terms of assembly, interacts with CCND1 and GRAP2. May also interact with COPS5, RPLP0, SIRT6, SYF2 and TCF3. Post-translationally, phosphorylated. Ubiquitously expressed. Expression is down-regulated in a variety of tumor types including breast, colon, prostate and rectal tumors, and is up-regulated in certain hepatic carcinomas.

The protein localises to the cytoplasm. The protein resides in the nucleus. May negatively regulate cell cycle progression. May act at least in part via inhibition of the cyclin-D1/CDK4 complex, thereby preventing phosphorylation of RB1 and blocking E2F-dependent transcription. This is Cyclin-D1-binding protein 1 (CCNDBP1) from Homo sapiens (Human).